The following is a 106-amino-acid chain: Urease subunit beta (106 aa).

It belongs to the urease beta subunit family. In terms of assembly, heterotrimer of UreA (gamma), UreB (beta) and UreC (alpha) subunits. Three heterotrimers associate to form the active enzyme.

The protein localises to the cytoplasm. It catalyses the reaction urea + 2 H2O + H(+) = hydrogencarbonate + 2 NH4(+). Its pathway is nitrogen metabolism; urea degradation; CO(2) and NH(3) from urea (urease route): step 1/1. This chain is Urease subunit beta, found in Prochlorococcus marinus subsp. pastoris (strain CCMP1986 / NIES-2087 / MED4).